The following is a 367-amino-acid chain: Methylthioribose-1-phosphate isomerase (367 aa).

Residue Asp250 is the Proton donor of the active site.

It belongs to the eIF-2B alpha/beta/delta subunits family. MtnA subfamily.

Its subcellular location is the cytoplasm. It localises to the nucleus. It catalyses the reaction 5-(methylsulfanyl)-alpha-D-ribose 1-phosphate = 5-(methylsulfanyl)-D-ribulose 1-phosphate. It functions in the pathway amino-acid biosynthesis; L-methionine biosynthesis via salvage pathway; L-methionine from S-methyl-5-thio-alpha-D-ribose 1-phosphate: step 1/6. In terms of biological role, catalyzes the interconversion of methylthioribose-1-phosphate (MTR-1-P) into methylthioribulose-1-phosphate (MTRu-1-P). The chain is Methylthioribose-1-phosphate isomerase (IDI2) from Hordeum vulgare (Barley).